Reading from the N-terminus, the 105-residue chain is Large ribosomal subunit protein eL36 (105 aa).

An N6-acetyllysine modification is found at lysine 62.

It belongs to the eukaryotic ribosomal protein eL36 family. Component of the large ribosomal subunit.

The protein resides in the cytoplasm. The protein localises to the cytosol. In terms of biological role, component of the large ribosomal subunit. The ribosome is a large ribonucleoprotein complex responsible for the synthesis of proteins in the cell. The sequence is that of Large ribosomal subunit protein eL36 (Rpl36) from Rattus norvegicus (Rat).